The chain runs to 240 residues: 1-(5-phosphoribosyl)-5-[(5-phosphoribosylamino)methylideneamino] imidazole-4-carboxamide isomerase (240 aa).

D8 functions as the Proton acceptor in the catalytic mechanism. D130 (proton donor) is an active-site residue.

This sequence belongs to the HisA/HisF family.

The protein resides in the cytoplasm. The enzyme catalyses 1-(5-phospho-beta-D-ribosyl)-5-[(5-phospho-beta-D-ribosylamino)methylideneamino]imidazole-4-carboxamide = 5-[(5-phospho-1-deoxy-D-ribulos-1-ylimino)methylamino]-1-(5-phospho-beta-D-ribosyl)imidazole-4-carboxamide. It functions in the pathway amino-acid biosynthesis; L-histidine biosynthesis; L-histidine from 5-phospho-alpha-D-ribose 1-diphosphate: step 4/9. This is 1-(5-phosphoribosyl)-5-[(5-phosphoribosylamino)methylideneamino] imidazole-4-carboxamide isomerase from Elusimicrobium minutum (strain Pei191).